A 409-amino-acid polypeptide reads, in one-letter code: Autophagy-related protein 37 (409 aa).

At 1-313 (MSESIDRVFV…LKLIKTVIKH (313 aa)) the chain is on the cytoplasmic side. The ACB domain maps to 5 to 103 (IDRVFVKAIG…LIDTMKQFAS (99 aa)). The helical transmembrane segment at 314–334 (VAIDAVIIAVLVAVIKRSIII) threads the bilayer. The Peroxisomal segment spans residues 335 to 409 (PNLISNEISL…VSRIRLIKRN (75 aa)).

Belongs to the ATG37 family. As to quaternary structure, interacts with ATG30 and PEX3. Phosphorylated.

The protein localises to the peroxisome membrane. Acyl-CoA binding protein which acts as the peroxisome receptor for pexophagy. Required for both micropexophagy and macropexophagy, but not for the cytoplasm to vacuole transport (Cvt) or autophagy pathways. Required for functional micropexophagic apparatus (MIPA) and relocation of ATG11 to the peroxisome-sequestering arms of the vacuole. Binds palmitoyl-CoA but not oleyl-CoA. The chain is Autophagy-related protein 37 from Komagataella phaffii (strain GS115 / ATCC 20864) (Yeast).